The chain runs to 363 residues: Pyrimidine monooxygenase RutA (363 aa).

Residues 49–50 (IK), asparagine 115, glutamate 124, 140–141 (RY), and serine 190 each bind FMN.

This sequence belongs to the NtaA/SnaA/DszA monooxygenase family. RutA subfamily.

The enzyme catalyses uracil + FMNH2 + NADH + O2 = (Z)-3-ureidoacrylate + FMN + NAD(+) + H2O + H(+). It catalyses the reaction thymine + FMNH2 + NADH + O2 = (Z)-2-methylureidoacrylate + FMN + NAD(+) + H2O + H(+). Its function is as follows. Catalyzes the pyrimidine ring opening between N-3 and C-4 by an unusual flavin hydroperoxide-catalyzed mechanism, adding oxygen atoms in the process to yield ureidoacrylate peracid, that immediately reacts with FMN forming ureidoacrylate and FMN-N(5)-oxide. The FMN-N(5)-oxide reacts spontaneously with NADH to produce FMN. Requires the flavin reductase RutF to regenerate FMN in vivo. The polypeptide is Pyrimidine monooxygenase RutA (Klebsiella pneumoniae (strain 342)).